We begin with the raw amino-acid sequence, 209 residues long: Superoxide dismutase [Mn/Fe] (209 aa).

His38, His90, Asp172, and His176 together coordinate Fe(3+). Positions 38, 90, 172, and 176 each coordinate Mn(2+).

The protein belongs to the iron/manganese superoxide dismutase family. The cofactor is Mn(2+). Fe(3+) is required as a cofactor.

It carries out the reaction 2 superoxide + 2 H(+) = H2O2 + O2. Functionally, destroys superoxide anion radicals which are normally produced within the cells and which are toxic to biological systems. Catalyzes the dismutation of superoxide anion radicals into O2 and H2O2 by successive reduction and oxidation of the transition metal ion at the active site. The protein is Superoxide dismutase [Mn/Fe] (sodB) of Rickettsia bellii (strain RML369-C).